Consider the following 649-residue polypeptide: Microtubule-associated protein VP6 (649 aa).

It is found in the virion. Its subcellular location is the host cytoplasm. The protein localises to the host cytoskeleton. Functionally, minor inner capsid component. Displays NTPase and RNA 5'-triphosphatase (RTPase) activities. May function as a cofactor of polymerase VP2. Associates with microtubules and plays a role in the formation, structural organization and morphology of viral inclusions, where the assembly of cores and the replication of viral RNA occur. The polypeptide is Microtubule-associated protein VP6 (S6) (Cryphonectria parasitica (Chestnut blight fungus)).